Here is a 249-residue protein sequence, read N- to C-terminus: Tumor necrosis factor receptor superfamily member 13B (249 aa).

At 1 to 128 (MAMAFCPKDQ…LSSDQLTLYC (128 aa)) the chain is on the extracellular side. TNFR-Cys repeat units follow at residues 5–38 (FCPK…TDFC) and 42–76 (NCRK…AHFC). 6 disulfides stabilise this stretch: C6/C19, C22/C34, C26/C38, C43/C58, C61/C72, and C65/C76. Residues 86–116 (LQPELGRPQAGEVEVRSDNSGRHQGSEHGPG) are disordered. Positions 98–111 (VEVRSDNSGRHQGS) are enriched in basic and acidic residues. A helical; Signal-anchor for type III membrane protein transmembrane segment spans residues 129–149 (TLGVCLCAIFCCFLVALASFL). Over 150-249 (RRRGEPLPSQ…ASTGDARPAT (100 aa)) the chain is Cytoplasmic. Residues 156–176 (LPSQPAGPRGSQANSPHAHRP) are disordered.

As to quaternary structure, binds TRAF2, TRAF5 and TRAF6. Binds the NH2-terminal domain of CAMLG with its C-terminus.

It is found in the membrane. Its function is as follows. Receptor for TNFSF13/APRIL and TNFSF13B/TALL1/BAFF/BLYS that binds both ligands with similar high affinity. Mediates calcineurin-dependent activation of NF-AT, as well as activation of NF-kappa-B and AP-1. Involved in the stimulation of B- and T-cell function and the regulation of humoral immunity. The protein is Tumor necrosis factor receptor superfamily member 13B (Tnfrsf13b) of Mus musculus (Mouse).